We begin with the raw amino-acid sequence, 143 residues long: SsrA-binding protein (143 aa).

This sequence belongs to the SmpB family.

It is found in the cytoplasm. Functionally, required for rescue of stalled ribosomes mediated by trans-translation. Binds to transfer-messenger RNA (tmRNA), required for stable association of tmRNA with ribosomes. tmRNA and SmpB together mimic tRNA shape, replacing the anticodon stem-loop with SmpB. tmRNA is encoded by the ssrA gene; the 2 termini fold to resemble tRNA(Ala) and it encodes a 'tag peptide', a short internal open reading frame. During trans-translation Ala-aminoacylated tmRNA acts like a tRNA, entering the A-site of stalled ribosomes, displacing the stalled mRNA. The ribosome then switches to translate the ORF on the tmRNA; the nascent peptide is terminated with the 'tag peptide' encoded by the tmRNA and targeted for degradation. The ribosome is freed to recommence translation, which seems to be the essential function of trans-translation. This is SsrA-binding protein from Deinococcus radiodurans (strain ATCC 13939 / DSM 20539 / JCM 16871 / CCUG 27074 / LMG 4051 / NBRC 15346 / NCIMB 9279 / VKM B-1422 / R1).